The primary structure comprises 362 residues: GMP reductase (362 aa).

Residues 26–27 (SR), Lys78, 129–131 (DVA), and 180–181 (IG) each bind NADP(+). Residues Gly181, Gly183, and Cys186 each coordinate K(+). Cys186 serves as the catalytic Thioimidate intermediate. Catalysis depends on Thr188, which acts as the Proton donor/acceptor. Arg189 contributes to the K(+) binding site. GMP-binding positions include 219–221 (DGG), 242–243 (GG), 268–270 (GMS), and 286–290 (RASEG). Residues Met269, 285 to 286 (YR), and 314 to 317 (STCT) contribute to the NADP(+) site.

This sequence belongs to the IMPDH/GMPR family.

The enzyme catalyses IMP + NH4(+) + NADP(+) = GMP + NADPH + 2 H(+). Catalyzes the irreversible NADPH-dependent deamination of GMP to IMP. It functions in the conversion of nucleobase, nucleoside and nucleotide derivatives of G to A nucleotides, and in maintaining the intracellular balance of A and G nucleotides. This chain is GMP reductase, found in Phytophthora infestans (Potato late blight agent).